Consider the following 187-residue polypeptide: MNKWKRLFFILLAINFILAAGFVALVLLPGEQAQVKDASESEYGFQVTSTKESLAAFVNSYLNDKASNKLDYKVEIDDDVHVAGKIKAFSTSIDAFIAFEPTVKKNGDVELNVTKFSLGKLSIPISFVLNYMDSFYELPSFVHVHPGDKSIEVRLSEMPLTNGMYVKADKINLEKDEIEFSYYHPKQ.

A helical membrane pass occupies residues 8–28 (FFILLAINFILAAGFVALVLL).

Its subcellular location is the membrane. This is an uncharacterized protein from Bacillus subtilis (strain 168).